The sequence spans 320 residues: ATP-dependent 6-phosphofructokinase (320 aa).

ATP is bound at residue glycine 12. 22–26 (RGVVR) is an ADP binding site. ATP-binding positions include 73-74 (RF) and 103-106 (GDGS). Aspartate 104 provides a ligand contact to Mg(2+). 126–128 (TID) provides a ligand contact to substrate. The active-site Proton acceptor is the aspartate 128. Arginine 155 serves as a coordination point for ADP. Residues arginine 163 and 170 to 172 (MGR) each bind substrate. Residues 186–188 (GCE), lysine 212, and 214–216 (KKH) each bind ADP. Residues glutamate 223, arginine 244, and 250-253 (HIQR) each bind substrate.

Belongs to the phosphofructokinase type A (PFKA) family. ATP-dependent PFK group I subfamily. Prokaryotic clade 'B1' sub-subfamily. Homotetramer. It depends on Mg(2+) as a cofactor.

The protein localises to the cytoplasm. It catalyses the reaction beta-D-fructose 6-phosphate + ATP = beta-D-fructose 1,6-bisphosphate + ADP + H(+). Its pathway is carbohydrate degradation; glycolysis; D-glyceraldehyde 3-phosphate and glycerone phosphate from D-glucose: step 3/4. Allosterically activated by ADP and other diphosphonucleosides, and allosterically inhibited by phosphoenolpyruvate. Functionally, catalyzes the phosphorylation of D-fructose 6-phosphate to fructose 1,6-bisphosphate by ATP, the first committing step of glycolysis. This Vibrio vulnificus (strain CMCP6) protein is ATP-dependent 6-phosphofructokinase.